The chain runs to 278 residues: Serine/arginine-rich splicing factor SR34B (278 aa).

The 76-residue stretch at 7-82 (RTIYVGNLPG…HHLRVELAHG (76 aa)) folds into the RRM 1 domain. The segment covering 81 to 91 (HGGRRSSHDAR) has biased composition (basic and acidic residues). Disordered stretches follow at residues 81–121 (HGGR…SEYR) and 192–263 (EYDS…RSLS). Residues 95–107 (SGRGRGGRGGGDG) are compositionally biased toward gly residues. 2 stretches are compositionally biased toward basic and acidic residues: residues 108-120 (GGRERGPSRRSEY) and 192-201 (EYDSRRDSRS). The region spanning 120 to 195 (YRVVVSGLPS…EYVRVREYDS (76 aa)) is the RRM 2 domain. A phosphoserine mark is found at Ser201, Ser203, Ser225, Ser231, Ser233, Ser242, Ser250, Ser259, and Ser263. Residues 207 to 243 (SYSKSRSRGRSPSRSRSRSRSRSKSRSPKAKSLRRSP) show a composition bias toward basic residues.

It belongs to the splicing factor SR family. SR subfamily. As to quaternary structure, component of the spliceosome.

It localises to the nucleus speckle. The protein localises to the nucleus. Its subcellular location is the nucleoplasm. In terms of biological role, probably involved in intron recognition and spliceosome assembly. The chain is Serine/arginine-rich splicing factor SR34B (SR34B) from Arabidopsis thaliana (Mouse-ear cress).